Here is a 180-residue protein sequence, read N- to C-terminus: NAD(P)H-quinone oxidoreductase subunit I, chloroplastic (180 aa).

2 consecutive 4Fe-4S ferredoxin-type domains span residues 55–84 (GRIH…VDWK) and 95–124 (LNYS…MTEE). Positions 64, 67, 70, 74, 104, 107, 110, and 114 each coordinate [4Fe-4S] cluster.

This sequence belongs to the complex I 23 kDa subunit family. As to quaternary structure, NDH is composed of at least 16 different subunits, 5 of which are encoded in the nucleus. [4Fe-4S] cluster is required as a cofactor.

It is found in the plastid. It localises to the chloroplast thylakoid membrane. The catalysed reaction is a plastoquinone + NADH + (n+1) H(+)(in) = a plastoquinol + NAD(+) + n H(+)(out). It carries out the reaction a plastoquinone + NADPH + (n+1) H(+)(in) = a plastoquinol + NADP(+) + n H(+)(out). Functionally, NDH shuttles electrons from NAD(P)H:plastoquinone, via FMN and iron-sulfur (Fe-S) centers, to quinones in the photosynthetic chain and possibly in a chloroplast respiratory chain. The immediate electron acceptor for the enzyme in this species is believed to be plastoquinone. Couples the redox reaction to proton translocation, and thus conserves the redox energy in a proton gradient. The protein is NAD(P)H-quinone oxidoreductase subunit I, chloroplastic of Nandina domestica (Heavenly bamboo).